Consider the following 422-residue polypeptide: Interleukin-11 receptor subunit alpha (422 aa).

An N-terminal signal peptide occupies residues M1 to A22. The Extracellular segment spans residues S24 to V370. The region spanning P27–G110 is the Ig-like C2-type domain. Cystine bridges form between C48/C94, C120/C130, and C170/C180. 2 consecutive Fibronectin type-III domains span residues P112–D219 and P220–T317. N127 carries N-linked (GlcNAc...) asparagine glycosylation. The N-linked (GlcNAc...) asparagine glycan is linked to N194. Positions W304–S308 match the WSXWS motif motif. Positions E335–R355 are disordered. The chain crosses the membrane as a helical span at residues S371–L391. Over R392 to L422 the chain is Cytoplasmic.

The protein belongs to the type I cytokine receptor family. Type 3 subfamily. In terms of assembly, on IL11 binding, forms a multimer complex with IL6ST/gp130. In terms of processing, a short soluble form is also released from the membrane by proteolysis. The sIL11RA is formed either by limited proteolysis of membrane-bound receptors, a process referred to as ectodomain shedding, or directly secreted from the cells after alternative mRNA splicing. mIL11RA is cleaved by the proteases ADAM10, ELANE and PRTN3.

The protein localises to the membrane. It is found in the secreted. In terms of biological role, receptor for interleukin-11 (IL11). The receptor systems for IL6, LIF, OSM, CNTF, IL11 and CT1 can utilize IL6ST for initiating signal transmission. The IL11/IL11RA/IL6ST complex may be involved in the control of proliferation and/or differentiation of skeletogenic progenitor or other mesenchymal cells. Essential for the normal development of craniofacial bones and teeth. Restricts suture fusion and tooth number. Functionally, soluble form of IL11 receptor (sIL11RA) that acts as an agonist of IL11 activity. The IL11:sIL11RA complex binds to IL6ST/gp130 on cell surfaces and induces signaling also on cells that do not express membrane-bound IL11RA in a process called IL11 trans-signaling. This is Interleukin-11 receptor subunit alpha (IL11RA) from Pongo abelii (Sumatran orangutan).